A 176-amino-acid chain; its full sequence is NAD(P)H-quinone oxidoreductase subunit 6, chloroplastic (176 aa).

5 helical membrane passes run 10–30 (FILV…VFFT), 32–52 (TIFS…FYIL), 63–83 (LLIY…FMNG), 92–112 (VWTV…ISQI), and 152–172 (FFLP…GAIF).

The protein belongs to the complex I subunit 6 family. NDH is composed of at least 16 different subunits, 5 of which are encoded in the nucleus.

It localises to the plastid. It is found in the chloroplast thylakoid membrane. The catalysed reaction is a plastoquinone + NADH + (n+1) H(+)(in) = a plastoquinol + NAD(+) + n H(+)(out). The enzyme catalyses a plastoquinone + NADPH + (n+1) H(+)(in) = a plastoquinol + NADP(+) + n H(+)(out). Functionally, NDH shuttles electrons from NAD(P)H:plastoquinone, via FMN and iron-sulfur (Fe-S) centers, to quinones in the photosynthetic chain and possibly in a chloroplast respiratory chain. The immediate electron acceptor for the enzyme in this species is believed to be plastoquinone. Couples the redox reaction to proton translocation, and thus conserves the redox energy in a proton gradient. In Phaseolus vulgaris (Kidney bean), this protein is NAD(P)H-quinone oxidoreductase subunit 6, chloroplastic (ndhG).